We begin with the raw amino-acid sequence, 615 residues long: Dihydroxy-acid dehydratase (615 aa).

Residue Asp83 coordinates Mg(2+). Residue Cys124 participates in [2Fe-2S] cluster binding. The Mg(2+) site is built by Asp125 and Lys126. Position 126 is an N6-carboxylysine (Lys126). Cys199 is a [2Fe-2S] cluster binding site. Glu495 lines the Mg(2+) pocket. The active-site Proton acceptor is the Ser521.

Belongs to the IlvD/Edd family. In terms of assembly, homodimer. [2Fe-2S] cluster serves as cofactor. Mg(2+) is required as a cofactor.

The catalysed reaction is (2R)-2,3-dihydroxy-3-methylbutanoate = 3-methyl-2-oxobutanoate + H2O. It catalyses the reaction (2R,3R)-2,3-dihydroxy-3-methylpentanoate = (S)-3-methyl-2-oxopentanoate + H2O. It functions in the pathway amino-acid biosynthesis; L-isoleucine biosynthesis; L-isoleucine from 2-oxobutanoate: step 3/4. The protein operates within amino-acid biosynthesis; L-valine biosynthesis; L-valine from pyruvate: step 3/4. In terms of biological role, functions in the biosynthesis of branched-chain amino acids. Catalyzes the dehydration of (2R,3R)-2,3-dihydroxy-3-methylpentanoate (2,3-dihydroxy-3-methylvalerate) into 2-oxo-3-methylpentanoate (2-oxo-3-methylvalerate) and of (2R)-2,3-dihydroxy-3-methylbutanoate (2,3-dihydroxyisovalerate) into 2-oxo-3-methylbutanoate (2-oxoisovalerate), the penultimate precursor to L-isoleucine and L-valine, respectively. The protein is Dihydroxy-acid dehydratase of Corynebacterium jeikeium (strain K411).